A 229-amino-acid polypeptide reads, in one-letter code: Acetylcholine-binding protein (229 aa).

The first 19 residues, 1 to 19, serve as a signal peptide directing secretion; that stretch reads MRRNIFCLACLWIVQACLS. Asn-85 is a glycosylation site (N-linked (GlcNAc...) asparagine). Residues 114 to 217 form the Ig-like domain; that stretch reads PEVLTPQLAR…PEAYEDVEVS (104 aa). Cys-142 and Cys-155 are oxidised to a cystine.

As to quaternary structure, homopentamer. N-glycosylated. Expressed by glial cells.

The protein resides in the synaptic cleft. Binds to acetylcholine. Modulates neuronal synaptic transmission. This chain is Acetylcholine-binding protein, found in Lymnaea stagnalis (Great pond snail).